Here is a 321-residue protein sequence, read N- to C-terminus: Lipoyl synthase (321 aa).

Cys-68, Cys-73, Cys-79, Cys-94, Cys-98, Cys-101, and Ser-308 together coordinate [4Fe-4S] cluster. The Radical SAM core domain maps to 80 to 297 (FNHGTATFMI…KAEAMAMGFT (218 aa)).

The protein belongs to the radical SAM superfamily. Lipoyl synthase family. The cofactor is [4Fe-4S] cluster.

The protein localises to the cytoplasm. The catalysed reaction is [[Fe-S] cluster scaffold protein carrying a second [4Fe-4S](2+) cluster] + N(6)-octanoyl-L-lysyl-[protein] + 2 oxidized [2Fe-2S]-[ferredoxin] + 2 S-adenosyl-L-methionine + 4 H(+) = [[Fe-S] cluster scaffold protein] + N(6)-[(R)-dihydrolipoyl]-L-lysyl-[protein] + 4 Fe(3+) + 2 hydrogen sulfide + 2 5'-deoxyadenosine + 2 L-methionine + 2 reduced [2Fe-2S]-[ferredoxin]. It functions in the pathway protein modification; protein lipoylation via endogenous pathway; protein N(6)-(lipoyl)lysine from octanoyl-[acyl-carrier-protein]: step 2/2. Functionally, catalyzes the radical-mediated insertion of two sulfur atoms into the C-6 and C-8 positions of the octanoyl moiety bound to the lipoyl domains of lipoate-dependent enzymes, thereby converting the octanoylated domains into lipoylated derivatives. The polypeptide is Lipoyl synthase (Enterobacter sp. (strain 638)).